The following is a 317-amino-acid chain: Acetyl-coenzyme A carboxylase carboxyl transferase subunit alpha (317 aa).

The CoA carboxyltransferase C-terminal domain maps to 37 to 292 (EINKKLEQTK…ADYITKGYNE (256 aa)).

Belongs to the AccA family. Acetyl-CoA carboxylase is a heterohexamer composed of biotin carboxyl carrier protein (AccB), biotin carboxylase (AccC) and two subunits each of ACCase subunit alpha (AccA) and ACCase subunit beta (AccD).

It is found in the cytoplasm. The enzyme catalyses N(6)-carboxybiotinyl-L-lysyl-[protein] + acetyl-CoA = N(6)-biotinyl-L-lysyl-[protein] + malonyl-CoA. Its pathway is lipid metabolism; malonyl-CoA biosynthesis; malonyl-CoA from acetyl-CoA: step 1/1. Component of the acetyl coenzyme A carboxylase (ACC) complex. First, biotin carboxylase catalyzes the carboxylation of biotin on its carrier protein (BCCP) and then the CO(2) group is transferred by the carboxyltransferase to acetyl-CoA to form malonyl-CoA. In Flavobacterium johnsoniae (strain ATCC 17061 / DSM 2064 / JCM 8514 / BCRC 14874 / CCUG 350202 / NBRC 14942 / NCIMB 11054 / UW101) (Cytophaga johnsonae), this protein is Acetyl-coenzyme A carboxylase carboxyl transferase subunit alpha.